Reading from the N-terminus, the 334-residue chain is Beta-hexosaminidase (334 aa).

Residues Asp-60, Arg-68, Arg-133, and 163 to 164 (KH) contribute to the substrate site. Residue His-176 is the Proton donor/acceptor of the active site. The active-site Nucleophile is Asp-247.

This sequence belongs to the glycosyl hydrolase 3 family. NagZ subfamily.

The protein resides in the cytoplasm. It carries out the reaction Hydrolysis of terminal non-reducing N-acetyl-D-hexosamine residues in N-acetyl-beta-D-hexosaminides.. It functions in the pathway cell wall biogenesis; peptidoglycan recycling. Plays a role in peptidoglycan recycling by cleaving the terminal beta-1,4-linked N-acetylglucosamine (GlcNAc) from peptide-linked peptidoglycan fragments, giving rise to free GlcNAc, anhydro-N-acetylmuramic acid and anhydro-N-acetylmuramic acid-linked peptides. The protein is Beta-hexosaminidase of Xanthomonas oryzae pv. oryzae (strain MAFF 311018).